The following is a 285-amino-acid chain: 2-hydroxy-6-oxononadienedioate/2-hydroxy-6-oxononatrienedioate hydrolase 1 (285 aa).

The active-site Proton acceptor is the histidine 265.

Belongs to the AB hydrolase superfamily. MhpC family. As to quaternary structure, homodimer.

The enzyme catalyses (2Z,4E)-2-hydroxy-6-oxonona-2,4-dienedioate + H2O = (2Z)-2-hydroxypenta-2,4-dienoate + succinate + H(+). It carries out the reaction (2Z,4E,7E)-2-hydroxy-6-oxonona-2,4,7-trienedioate + H2O = (2Z)-2-hydroxypenta-2,4-dienoate + fumarate + H(+). It functions in the pathway aromatic compound metabolism; 3-phenylpropanoate degradation. Its function is as follows. Catalyzes the cleavage of the C5-C6 bond of 2-hydroxy-6-oxononadienedioate and 2-hydroxy-6-oxononatrienedioate, a dienol ring fission product of the bacterial meta-cleavage pathway for degradation of phenylpropionic acid. This is 2-hydroxy-6-oxononadienedioate/2-hydroxy-6-oxononatrienedioate hydrolase 1 from Pseudomonas putida (Arthrobacter siderocapsulatus).